We begin with the raw amino-acid sequence, 187 residues long: Signal peptidase complex catalytic subunit SEC11 (187 aa).

The Cytoplasmic portion of the chain corresponds to 1–18 (MLSSLSPYMANPRNTLSQ). Residues 19–39 (VLNFGLVLSSAFMVWKALSVI) form a helical; Signal-anchor for type II membrane protein membrane-spanning segment. Topologically, residues 40–187 (TNSASPVVVV…MGLMVMLQRE (148 aa)) are lumenal. Catalysis depends on charge relay system residues serine 53 and histidine 92. An N-linked (GlcNAc...) asparagine glycan is attached at asparagine 125. The active-site Charge relay system is the aspartate 129. The segment at 173–184 (VLLGFMGLMVML) is C-terminal short (CTS) helix.

The protein belongs to the peptidase S26B family. Component of the signal peptidase complex (SPC) composed of a catalytic subunit SEC11 and three accessory subunits SPC1, SPC2 and SPC3. The complex induces a local thinning of the ER membrane which is used to measure the length of the signal peptide (SP) h-region of protein substrates. This ensures the selectivity of the complex towards h-regions shorter than 18-20 amino acids. SPC associates with the translocon complex.

The protein resides in the endoplasmic reticulum membrane. It carries out the reaction Cleavage of hydrophobic, N-terminal signal or leader sequences from secreted and periplasmic proteins.. In terms of biological role, catalytic component of the signal peptidase complex (SPC) which catalyzes the cleavage of N-terminal signal sequences from nascent proteins as they are translocated into the lumen of the endoplasmic reticulum. Specifically cleaves N-terminal signal peptides that contain a hydrophobic alpha-helix (h-region) shorter than 18-20 amino acids. The polypeptide is Signal peptidase complex catalytic subunit SEC11 (SEC11) (Ajellomyces capsulatus (strain G186AR / H82 / ATCC MYA-2454 / RMSCC 2432) (Darling's disease fungus)).